The primary structure comprises 694 residues: ATP-dependent RNA helicase DHX33 (694 aa).

The Helicase ATP-binding domain maps to 78-246 (LKELEANDTV…FNCKGMYLEG (169 aa)). 91 to 98 (SETGSGKT) provides a ligand contact to ATP. Positions 188–191 (DEAH) match the DEAH box motif. Positions 270–443 (TLFHIHRTTP…SMVLQLLALD (174 aa)) constitute a Helicase C-terminal domain.

The protein belongs to the DEAD box helicase family. DEAH subfamily.

The protein resides in the nucleus. It localises to the nucleolus. It catalyses the reaction ATP + H2O = ADP + phosphate + H(+). In terms of biological role, part of a translational control module, also containing pths/DDX47 and ais/DDX52, which coordinates germline stem cell differentiation with ribosome biogenesis during oogenesis. This module allows for coregulation of ribosomal proteins and non1/GTPBP4, a p53 repressor, preventing p53 stabilization, cell cycle arrest and loss of stem cell differentiation. This is ATP-dependent RNA helicase DHX33 from Drosophila melanogaster (Fruit fly).